A 76-amino-acid chain; its full sequence is U-actitoxin-Avd8c (76 aa).

Residues 1–16 (LVIVFVVLLGVPLISA) form the signal peptide. Positions 17–33 (NEEELLAILQDQRNDAR) are excised as a propeptide.

It belongs to the sea anemone 8 toxin family.

The protein resides in the secreted. It localises to the nematocyst. The chain is U-actitoxin-Avd8c from Anemonia viridis (Snakelocks anemone).